Consider the following 88-residue polypeptide: Small ribosomal subunit protein uS15 (88 aa).

This sequence belongs to the universal ribosomal protein uS15 family. In terms of assembly, part of the 30S ribosomal subunit. Forms a bridge to the 50S subunit in the 70S ribosome, contacting the 23S rRNA.

Functionally, one of the primary rRNA binding proteins, it binds directly to 16S rRNA where it helps nucleate assembly of the platform of the 30S subunit by binding and bridging several RNA helices of the 16S rRNA. Its function is as follows. Forms an intersubunit bridge (bridge B4) with the 23S rRNA of the 50S subunit in the ribosome. This Mycoplasmopsis agalactiae (strain NCTC 10123 / CIP 59.7 / PG2) (Mycoplasma agalactiae) protein is Small ribosomal subunit protein uS15.